Reading from the N-terminus, the 150-residue chain is Arginine repressor (150 aa).

This sequence belongs to the ArgR family.

It localises to the cytoplasm. The protein operates within amino-acid biosynthesis; L-arginine biosynthesis [regulation]. Its function is as follows. Regulates arginine biosynthesis genes. This is Arginine repressor from Clostridium botulinum (strain Loch Maree / Type A3).